The primary structure comprises 70 residues: Metallothionein-like protein 1 (70 aa).

This sequence belongs to the metallothionein superfamily. Type 15 family.

Metallothioneins have a high content of cysteine residues that bind various heavy metals. This is Metallothionein-like protein 1 (MT1) from Festuca rubra (Red fescue).